A 693-amino-acid chain; its full sequence is C6 finger domain transcription factor nscR (693 aa).

Residues 17–43 constitute a DNA-binding region (zn(2)-C6 fungal-type); that stretch reads CELCRERKVKCDKLDPCTNCSSAGVIC. The tract at residues 589 to 608 is disordered; that stretch reads AANTLSVPHTPPSRSSITSS.

Its subcellular location is the nucleus. Functionally, transcription factor that specifically regulates the neosartoricin B biosynthesis gene cluster. This is C6 finger domain transcription factor nscR from Trichophyton rubrum (strain ATCC MYA-4607 / CBS 118892) (Athlete's foot fungus).